The following is a 509-amino-acid chain: Glutamyl-tRNA(Gln) amidotransferase subunit B, mitochondrial (509 aa).

It belongs to the GatB/GatE family. GatB subfamily. Subunit of the heterotrimeric GatFAB amidotransferase (AdT) complex, composed of A, B and F subunits.

The protein resides in the mitochondrion. The enzyme catalyses L-glutamyl-tRNA(Gln) + L-glutamine + ATP + H2O = L-glutaminyl-tRNA(Gln) + L-glutamate + ADP + phosphate + H(+). Its function is as follows. Allows the formation of correctly charged Gln-tRNA(Gln) through the transamidation of misacylated Glu-tRNA(Gln) in the mitochondria. The reaction takes place in the presence of glutamine and ATP through an activated gamma-phospho-Glu-tRNA(Gln). This is Glutamyl-tRNA(Gln) amidotransferase subunit B, mitochondrial from Candida dubliniensis (strain CD36 / ATCC MYA-646 / CBS 7987 / NCPF 3949 / NRRL Y-17841) (Yeast).